The chain runs to 263 residues: Endonuclease 8 (263 aa).

P2 serves as the catalytic Schiff-base intermediate with DNA. E3 functions as the Proton donor in the catalytic mechanism. K53 serves as the catalytic Proton donor; for beta-elimination activity. The DNA site is built by Q70, R125, and N169. The FPG-type zinc-finger motif lies at 229–263 (KVFHRDGELCERCGGIIEKTTLSSRPFYWCPGCQH). Residue R253 is the Proton donor; for delta-elimination activity of the active site.

It belongs to the FPG family. The cofactor is Zn(2+).

The enzyme catalyses 2'-deoxyribonucleotide-(2'-deoxyribose 5'-phosphate)-2'-deoxyribonucleotide-DNA = a 3'-end 2'-deoxyribonucleotide-(2,3-dehydro-2,3-deoxyribose 5'-phosphate)-DNA + a 5'-end 5'-phospho-2'-deoxyribonucleoside-DNA + H(+). Involved in base excision repair of DNA damaged by oxidation or by mutagenic agents. Acts as a DNA glycosylase that recognizes and removes damaged bases. Has a preference for oxidized pyrimidines, such as thymine glycol, 5,6-dihydrouracil and 5,6-dihydrothymine. Has AP (apurinic/apyrimidinic) lyase activity and introduces nicks in the DNA strand. Cleaves the DNA backbone by beta-delta elimination to generate a single-strand break at the site of the removed base with both 3'- and 5'-phosphates. In Escherichia coli O7:K1 (strain IAI39 / ExPEC), this protein is Endonuclease 8.